A 103-amino-acid chain; its full sequence is Histone H4 (103 aa).

Gly residues predominate over residues 1 to 14 (MTGRGKGGKGLGKG). The segment at 1 to 20 (MTGRGKGGKGLGKGGAKRHR) is disordered. Position 6 is an N6-acetyl-N6-methyllysine; alternate (K6). 3 positions are modified to N6-methyllysine; alternate: K6, K9, and K13. The residue at position 13 (K13) is an N6-acetyl-N6-methyllysine; alternate. The DNA-binding element occupies 17-21 (KRHRK). Position 92 is an N6-glutaryllysine (K92).

The protein belongs to the histone H4 family. In terms of assembly, the nucleosome is a histone octamer containing two molecules each of H2A, H2B, H3 and H4 assembled in one H3-H4 heterotetramer and two H2A-H2B heterodimers. The octamer wraps approximately 147 bp of DNA. In terms of processing, glutarylation at Lys-92 (H4K91glu) destabilizes nucleosomes by promoting dissociation of the H2A-H2B dimers from nucleosomes.

The protein localises to the nucleus. It localises to the chromosome. In terms of biological role, core component of nucleosome. Nucleosomes wrap and compact DNA into chromatin, limiting DNA accessibility to the cellular machineries which require DNA as a template. Histones thereby play a central role in transcription regulation, DNA repair, DNA replication and chromosomal stability. DNA accessibility is regulated via a complex set of post-translational modifications of histones, also called histone code, and nucleosome remodeling. This is Histone H4 (hH4-1) from Neurospora crassa (strain ATCC 24698 / 74-OR23-1A / CBS 708.71 / DSM 1257 / FGSC 987).